The following is a 470-amino-acid chain: Siroheme synthase (470 aa).

The interval 1 to 203 (MDYLPIFVEL…GQIQQAEKQL (203 aa)) is precorrin-2 dehydrogenase /sirohydrochlorin ferrochelatase. NAD(+) contacts are provided by residues 22–23 (EV) and 43–44 (PE). Ser-128 carries the phosphoserine modification. The interval 214-470 (GELALVGAGP…ISRPAVVDFA (257 aa)) is uroporphyrinogen-III C-methyltransferase. An S-adenosyl-L-methionine-binding site is contributed by Pro-223. Asp-246 acts as the Proton acceptor in catalysis. The active-site Proton donor is the Lys-268. Residues 299-301 (GGD), Ile-304, 329-330 (TA), Met-381, and Gly-410 each bind S-adenosyl-L-methionine.

In the N-terminal section; belongs to the precorrin-2 dehydrogenase / sirohydrochlorin ferrochelatase family. This sequence in the C-terminal section; belongs to the precorrin methyltransferase family.

The catalysed reaction is uroporphyrinogen III + 2 S-adenosyl-L-methionine = precorrin-2 + 2 S-adenosyl-L-homocysteine + H(+). It carries out the reaction precorrin-2 + NAD(+) = sirohydrochlorin + NADH + 2 H(+). The enzyme catalyses siroheme + 2 H(+) = sirohydrochlorin + Fe(2+). It functions in the pathway cofactor biosynthesis; adenosylcobalamin biosynthesis; precorrin-2 from uroporphyrinogen III: step 1/1. Its pathway is cofactor biosynthesis; adenosylcobalamin biosynthesis; sirohydrochlorin from precorrin-2: step 1/1. It participates in porphyrin-containing compound metabolism; siroheme biosynthesis; precorrin-2 from uroporphyrinogen III: step 1/1. The protein operates within porphyrin-containing compound metabolism; siroheme biosynthesis; siroheme from sirohydrochlorin: step 1/1. It functions in the pathway porphyrin-containing compound metabolism; siroheme biosynthesis; sirohydrochlorin from precorrin-2: step 1/1. Functionally, multifunctional enzyme that catalyzes the SAM-dependent methylations of uroporphyrinogen III at position C-2 and C-7 to form precorrin-2 via precorrin-1. Then it catalyzes the NAD-dependent ring dehydrogenation of precorrin-2 to yield sirohydrochlorin. Finally, it catalyzes the ferrochelation of sirohydrochlorin to yield siroheme. In Photorhabdus laumondii subsp. laumondii (strain DSM 15139 / CIP 105565 / TT01) (Photorhabdus luminescens subsp. laumondii), this protein is Siroheme synthase.